Consider the following 257-residue polypeptide: Snake venom serine proteinase 11 (257 aa).

The first 18 residues, 1–18 (MVLIRVLANLLILQLSYA), serve as a signal peptide directing secretion. The propeptide occupies 19–24 (QKSSEL). The region spanning 25 to 248 (VVGGDECNIN…YTEWIQSIIT (224 aa)) is the Peptidase S1 domain. 6 cysteine pairs are disulfide-bonded: Cys-31/Cys-162, Cys-49/Cys-65, Cys-97/Cys-255, Cys-141/Cys-209, Cys-173/Cys-188, and Cys-199/Cys-224. Residues His-64 and Asp-109 each act as charge relay system in the active site. An N-linked (GlcNAc...) asparagine glycan is attached at Asn-120. Ser-203 acts as the Charge relay system in catalysis.

This sequence belongs to the peptidase S1 family. Snake venom subfamily. As to quaternary structure, monomer. As to expression, expressed by the venom gland.

It is found in the secreted. Functionally, snake venom serine protease that may act in the hemostasis system of the prey. The sequence is that of Snake venom serine proteinase 11 from Crotalus adamanteus (Eastern diamondback rattlesnake).